Consider the following 1251-residue polypeptide: Phospholipid-transporting ATPase IC (1251 aa).

The tract at residues 1 to 52 (MSTERDSETTFDEESQPNDEVVPYSDDETEDELEDQGSTVEPEQNRVNREAE) is disordered. Residues 1 to 121 (MSTERDSETT…LFEQFKRAAN (121 aa)) are Cytoplasmic-facing. The span at 25-35 (SDDETEDELED) shows a compositional bias: acidic residues. Over residues 43-52 (EQNRVNREAE) the composition is skewed to basic and acidic residues. The chain crosses the membrane as a helical span at residues 122–142 (FYFLILLILQAIPQISTLAWY). The Exoplasmic loop portion of the chain corresponds to 143–144 (TT). The chain crosses the membrane as a helical span at residues 145-165 (LVPLLLVLGITAIKDLVDDVA). Topologically, residues 166-339 (RHKMDKEINN…RTKIDYLMNY (174 aa)) are cytoplasmic. Residues 340–360 (MVYTIFIVLILVSAGLAIGHA) form a helical membrane-spanning segment. Residues 361–385 (YWEAQVGNYSWYLYDGENATPSYRG) are Exoplasmic loop-facing. The helical transmembrane segment at 386 to 406 (FLNFWGYIIVLNTMVPISLYV) threads the bilayer. The Cytoplasmic portion of the chain corresponds to 407–952 (SVEVIRLGQS…SYIRMCKFLR (546 aa)). Catalysis depends on Asp-454, which acts as the 4-aspartylphosphate intermediate. Asp-454, Lys-455, Thr-456, Glu-555, Phe-596, Lys-619, Arg-652, Thr-732, Gly-733, Asp-734, Arg-867, and Lys-873 together coordinate ATP. Mg(2+) is bound at residue Asp-454. Thr-456 provides a ligand contact to Mg(2+). Mg(2+) is bound at residue Asp-893. ATP contacts are provided by Asn-896 and Asp-897. Asp-897 provides a ligand contact to Mg(2+). The helical transmembrane segment at 953–973 (YFFYKNFAFTLVHFWYSFFNG) threads the bilayer. The Exoplasmic loop portion of the chain corresponds to 974 to 982 (YSAQTAYED). Residues 983 to 1003 (WFITLYNVLYSSLPVLLMGLL) form a helical membrane-spanning segment. At 1004–1032 (DQDVSDKLSLRFPGLYVVGQRDLLFNYKR) the chain is on the cytoplasmic side. A helical membrane pass occupies residues 1033–1053 (FFVSLLHGVLTSMVLFFIPLG). Residues 1054–1071 (AYLQTVGQDGEAPSDYQS) lie on the Exoplasmic loop side of the membrane. The chain crosses the membrane as a helical span at residues 1072-1092 (FAVTVASALVITVNFQIGLDT). Over 1093 to 1094 (SY) the chain is Cytoplasmic. Residues 1095–1115 (WTFVNAFSIFGSIALYFGIMF) traverse the membrane as a helical segment. The Exoplasmic loop portion of the chain corresponds to 1116–1142 (DFHSAGIHVLFPSAFQFTGTASNALRQ). Residues 1143 to 1163 (PYIWLTIILTVAVCLLPVVAI) traverse the membrane as a helical segment. Topologically, residues 1164–1251 (RFLSMTIWPS…TAEYRRTVES (88 aa)) are cytoplasmic. A Phosphoserine modification is found at Ser-1223.

Belongs to the cation transport ATPase (P-type) (TC 3.A.3) family. Type IV subfamily. As to quaternary structure, component of a P4-ATPase flippase complex which consists of a catalytic alpha subunit ATP8B1 and an accessory beta subunit TMEM30A. The flippase ATP8B1:TMEM30A complex can form an intermediate phosphoenzyme in vitro. Also interacts with beta subunit TMEM30B. Requires Mg(2+) as cofactor. Hepatocytes, bile duct, intestinal epithelial cells (cholangiocytes and ileocytes), and pancreatic acinar cells.

Its subcellular location is the cell membrane. The protein localises to the apical cell membrane. It is found in the cell projection. The protein resides in the stereocilium. It localises to the endoplasmic reticulum. Its subcellular location is the golgi apparatus. It catalyses the reaction ATP + H2O + phospholipidSide 1 = ADP + phosphate + phospholipidSide 2.. The enzyme catalyses a 1,2-diacyl-sn-glycero-3-phosphocholine(out) + ATP + H2O = a 1,2-diacyl-sn-glycero-3-phosphocholine(in) + ADP + phosphate + H(+). It carries out the reaction a 1,2-diacyl-sn-glycero-3-phospho-L-serine(out) + ATP + H2O = a 1,2-diacyl-sn-glycero-3-phospho-L-serine(in) + ADP + phosphate + H(+). Catalytic component of a P4-ATPase flippase complex which catalyzes the hydrolysis of ATP coupled to the transport of phospholipids, in particular phosphatidylcholines (PC), from the outer to the inner leaflet of the plasma membrane. May participate in the establishment of the canalicular membrane integrity by ensuring asymmetric distribution of phospholipids in the canicular membrane. Thus may have a role in the regulation of bile acids transport into the canaliculus, uptake of bile acids from intestinal contents into intestinal mucosa or both and protect hepatocytes from bile salts. Involved in the microvillus formation in polarized epithelial cells; the function seems to be independent from its flippase activity. Participates in correct apical membrane localization of CDC42, CFTR and SLC10A2. Enables CDC42 clustering at the apical membrane during enterocyte polarization through the interaction between CDC42 polybasic region and negatively charged membrane lipids provided by ATP8B1. Together with TMEM30A is involved in uptake of the synthetic drug alkylphospholipid perifosine. Required for the preservation of cochlear hair cells in the inner ear. According PubMed:20852622 is proposed to act as cardiolipin transporter during inflammatory injury; the function is questioned by PubMed:21475228. In Mus musculus (Mouse), this protein is Phospholipid-transporting ATPase IC.